The sequence spans 440 residues: Transposon Ty1-DR3 Gag polyprotein (440 aa).

3 stretches are compositionally biased toward polar residues: residues 1–10 (MESQQLSNYP), 48–60 (TKANSQQTTTPAS), and 127–152 (QSQFPQYPSSVGTPLSTPSPESGNTF). Disordered stretches follow at residues 1-93 (MESQ…MMTQ), 126-173 (PQSQ…RPPP), and 352-440 (GSRN…PETY). Low complexity predominate over residues 153–165 (TDSSSADSDMTST). Positions 299–401 (NNGIHINNKV…NSKSKTARAH (103 aa)) are RNA-binding. The segment covering 402 to 428 (NVSTSINSPSTDNDSISKSTTEPIQLN) has biased composition (polar residues). A Phosphoserine modification is found at serine 416. Over residues 429–440 (NKHDLHLRPETY) the composition is skewed to basic and acidic residues.

In terms of assembly, homotrimer.

It is found in the cytoplasm. In terms of biological role, capsid protein (CA) is the structural component of the virus-like particle (VLP), forming the shell that encapsulates the retrotransposons dimeric RNA genome. The particles are assembled from trimer-clustered units and there are holes in the capsid shells that allow for the diffusion of macromolecules. CA also has nucleocapsid-like chaperone activity, promoting primer tRNA(i)-Met annealing to the multipartite primer-binding site (PBS), dimerization of Ty1 RNA and initiation of reverse transcription. This Saccharomyces cerevisiae (strain ATCC 204508 / S288c) (Baker's yeast) protein is Transposon Ty1-DR3 Gag polyprotein (TY1A-DR3).